Reading from the N-terminus, the 130-residue chain is Small ribosomal subunit protein eS6 (130 aa).

Residues 78 to 98 (SGPPGFRPERKGERRRKTVRG) are disordered.

The protein belongs to the eukaryotic ribosomal protein eS6 family.

The polypeptide is Small ribosomal subunit protein eS6 (Methanopyrus kandleri (strain AV19 / DSM 6324 / JCM 9639 / NBRC 100938)).